A 71-amino-acid polypeptide reads, in one-letter code: Paralithocin 2 (71 aa).

Positions 1 to 23 (MGAAKVLLVVLAVMVAVPNLAEG) are cleaved as a signal peptide. 4 disulfide bridges follow: C29–C58, C34–C54, C39–C52, and C44–C55. An Arginine amide; partial modification is found at R70.

Belongs to the paralithocin family. In terms of processing, the amidated form is probably the active form.

Functionally, has antibacterial activity, mainly against marine Gram-positive bacteria like C.maltaromaticum (MIC=50 uM), C.mobile (MIC=50 uM), C.divergens (MIC=50 uM) and C.funditum (MIC=25 uM) but also against C.glutamicum (MIC=12.5 uM). Has very little or no activity against Gram-negative bacteria. This chain is Paralithocin 2, found in Paralithodes camtschaticus (Red king crab).